The following is a 231-amino-acid chain: Flagellar L-ring protein (231 aa).

An N-terminal signal peptide occupies residues 1 to 18 (MNRLMIVSLLGIATALGG). Residue C19 is the site of N-palmitoyl cysteine attachment. Residue C19 is the site of S-diacylglycerol cysteine attachment. A disordered region spans residues 118-141 (LSLSAEYGGSRDAKGDSQAGQSNS).

Belongs to the FlgH family. As to quaternary structure, the basal body constitutes a major portion of the flagellar organelle and consists of four rings (L,P,S, and M) mounted on a central rod.

It is found in the cell outer membrane. The protein resides in the bacterial flagellum basal body. Its function is as follows. Assembles around the rod to form the L-ring and probably protects the motor/basal body from shearing forces during rotation. This Pseudomonas aeruginosa (strain UCBPP-PA14) protein is Flagellar L-ring protein.